The following is a 171-amino-acid chain: 3-hydroxydecanoyl-[acyl-carrier-protein] dehydratase (171 aa).

Residue histidine 70 is part of the active site.

The protein belongs to the thioester dehydratase family. FabA subfamily. In terms of assembly, homodimer.

It is found in the cytoplasm. It carries out the reaction a (3R)-hydroxyacyl-[ACP] = a (2E)-enoyl-[ACP] + H2O. The enzyme catalyses (3R)-hydroxydecanoyl-[ACP] = (2E)-decenoyl-[ACP] + H2O. The catalysed reaction is (2E)-decenoyl-[ACP] = (3Z)-decenoyl-[ACP]. Its pathway is lipid metabolism; fatty acid biosynthesis. Necessary for the introduction of cis unsaturation into fatty acids. Catalyzes the dehydration of (3R)-3-hydroxydecanoyl-ACP to E-(2)-decenoyl-ACP and then its isomerization to Z-(3)-decenoyl-ACP. Can catalyze the dehydratase reaction for beta-hydroxyacyl-ACPs with saturated chain lengths up to 16:0, being most active on intermediate chain length. The sequence is that of 3-hydroxydecanoyl-[acyl-carrier-protein] dehydratase from Stutzerimonas stutzeri (strain A1501) (Pseudomonas stutzeri).